The primary structure comprises 211 residues: Glutathione S-transferase class-mu 28 kDa isozyme (211 aa).

The GST N-terminal domain maps to 4–86 (DHIKVIYFNG…YMAKKHHMMG (83 aa)). Positions 10, 16, 41, 45, 53, 70, 71, and 104 each coordinate glutathione. The GST C-terminal domain occupies 88–211 (TDEEYYNVEK…YLSDRAATPF (124 aa)).

The protein belongs to the GST superfamily. Mu family. Homodimer.

The enzyme catalyses RX + glutathione = an S-substituted glutathione + a halide anion + H(+). Conjugation of reduced glutathione to a wide number of exogenous and endogenous hydrophobic electrophiles. Functionally, GST isoenzymes appear to play a central role in the parasite detoxification system. Other functions are also suspected including a role in increasing the solubility of haematin in the parasite gut. The chain is Glutathione S-transferase class-mu 28 kDa isozyme from Schistosoma bovis (Blood fluke).